The following is a 365-amino-acid chain: Flagellar P-ring protein 2 (365 aa).

The first 19 residues, 1-19 (MKKWIVMASLLLAALPAMS), serve as a signal peptide directing secretion.

This sequence belongs to the FlgI family. In terms of assembly, the basal body constitutes a major portion of the flagellar organelle and consists of four rings (L,P,S, and M) mounted on a central rod.

The protein resides in the periplasm. It is found in the bacterial flagellum basal body. In terms of biological role, assembles around the rod to form the L-ring and probably protects the motor/basal body from shearing forces during rotation. In Chromobacterium violaceum (strain ATCC 12472 / DSM 30191 / JCM 1249 / CCUG 213 / NBRC 12614 / NCIMB 9131 / NCTC 9757 / MK), this protein is Flagellar P-ring protein 2.